The primary structure comprises 65 residues: Small ribosomal subunit protein bS21 (65 aa).

The segment at 43–65 is disordered; sequence VDDRLKRARSKRRAQRANEESNA. Residues 48-57 show a composition bias toward basic residues; that stretch reads KRARSKRRAQ.

The protein belongs to the bacterial ribosomal protein bS21 family.

In Chloroherpeton thalassium (strain ATCC 35110 / GB-78), this protein is Small ribosomal subunit protein bS21.